The chain runs to 206 residues: MKILVTAFDPFGGESINPSYEVLKNLKDNIEGAEIVKIQVPTVFYLSVEKAIEKIKEVNPDAVLSIGQAGGRYDISVERVAINIDDARIPDNIGQQPIDTPIDPEGAPAYFATIPIKEIVEEIKKENIPASISNTAGTYVCNHLMYGILNYIHKNKLNIKAGFIHIPYLPVQVLNKPSTPSMSLGDMVKAIETAIKVIVKSCKKSR.

Residues glutamate 78, cysteine 141, and histidine 165 contribute to the active site.

Belongs to the peptidase C15 family. As to quaternary structure, homotetramer.

It is found in the cytoplasm. The enzyme catalyses Release of an N-terminal pyroglutamyl group from a polypeptide, the second amino acid generally not being Pro.. Functionally, removes 5-oxoproline from various penultimate amino acid residues except L-proline. This chain is Pyrrolidone-carboxylate peptidase 2, found in Caldanaerobacter subterraneus subsp. tengcongensis (strain DSM 15242 / JCM 11007 / NBRC 100824 / MB4) (Thermoanaerobacter tengcongensis).